A 203-amino-acid chain; its full sequence is Small ribosomal subunit protein uS7 (203 aa).

The interval 1 to 22 is disordered; that stretch reads MSESEAPEPDQPAGAEEATGAK.

Belongs to the universal ribosomal protein uS7 family. In terms of assembly, part of the 30S ribosomal subunit.

One of the primary rRNA binding proteins, it binds directly to 16S rRNA where it nucleates assembly of the head domain of the 30S subunit. Is located at the subunit interface close to the decoding center. This chain is Small ribosomal subunit protein uS7, found in Halococcus morrhuae (Micrococcus morrhuae).